Here is a 581-residue protein sequence, read N- to C-terminus: Arginine--tRNA ligase (581 aa).

The 'HIGH' region motif lies at 131-141; that stretch reads ANPTGPLHVGH.

Belongs to the class-I aminoacyl-tRNA synthetase family. In terms of assembly, monomer.

Its subcellular location is the cytoplasm. It catalyses the reaction tRNA(Arg) + L-arginine + ATP = L-arginyl-tRNA(Arg) + AMP + diphosphate. The chain is Arginine--tRNA ligase from Ruegeria pomeroyi (strain ATCC 700808 / DSM 15171 / DSS-3) (Silicibacter pomeroyi).